The sequence spans 829 residues: Periplasmic nitrate reductase (829 aa).

The first 30 residues, 1 to 30 (MNSPRPTPPPFAAAAAGLPILVRASNLVTE), serve as a signal peptide directing secretion. The 4Fe-4S Mo/W bis-MGD-type domain occupies 36–92 (LVWNKAPCRFCGTGCSVMVATRDGQVVATHGDIKAEVNRGINCVKGYFLSKIMYGSD). The [4Fe-4S] cluster site is built by cysteine 43, cysteine 46, cysteine 50, and cysteine 78. Mo-bis(molybdopterin guanine dinucleotide)-binding positions include lysine 80, glutamine 147, asparagine 172, cysteine 176, 209 to 216 (WGSNMAEM), 240 to 244 (STFEH), 259 to 261 (QTD), methionine 370, glutamine 374, asparagine 480, 506 to 507 (SD), lysine 529, aspartate 556, and 716 to 725 (TGRVLEHWHT). Phenylalanine 792 lines the substrate pocket. Mo-bis(molybdopterin guanine dinucleotide)-binding residues include asparagine 800 and lysine 817.

Belongs to the prokaryotic molybdopterin-containing oxidoreductase family. NasA/NapA/NarB subfamily. In terms of assembly, component of the periplasmic nitrate reductase NapAB complex composed of NapA and NapB. [4Fe-4S] cluster serves as cofactor. The cofactor is Mo-bis(molybdopterin guanine dinucleotide).

It localises to the periplasm. It carries out the reaction 2 Fe(II)-[cytochrome] + nitrate + 2 H(+) = 2 Fe(III)-[cytochrome] + nitrite + H2O. Its function is as follows. Catalytic subunit of the periplasmic nitrate reductase complex NapAB. Receives electrons from NapB and catalyzes the reduction of nitrate to nitrite. This is Periplasmic nitrate reductase from Pseudomonas aeruginosa (strain ATCC 15692 / DSM 22644 / CIP 104116 / JCM 14847 / LMG 12228 / 1C / PRS 101 / PAO1).